A 183-amino-acid polypeptide reads, in one-letter code: Thymidine kinase (183 aa).

11–18 (GPMFSGKT) contacts ATP. Glu89 (proton acceptor) is an active-site residue. Phe119 serves as a coordination point for substrate. 2 residues coordinate Zn(2+): Cys144 and Cys147. A substrate-binding site is contributed by 163 to 167 (VMDIG). Zn(2+) is bound by residues Cys176 and Cys179.

The protein belongs to the thymidine kinase family.

The catalysed reaction is thymidine + ATP = dTMP + ADP + H(+). The protein is Thymidine kinase (TK) of Vertebrata (FPV).